The following is a 183-amino-acid chain: Ribosome maturation factor RimM (183 aa).

The PRC barrel domain maps to 104–183 (EGDYYWKDLI…TIEVDWDPGF (80 aa)).

The protein belongs to the RimM family. Binds ribosomal protein uS19.

The protein resides in the cytoplasm. Its function is as follows. An accessory protein needed during the final step in the assembly of 30S ribosomal subunit, possibly for assembly of the head region. Essential for efficient processing of 16S rRNA. May be needed both before and after RbfA during the maturation of 16S rRNA. It has affinity for free ribosomal 30S subunits but not for 70S ribosomes. In Cronobacter sakazakii (strain ATCC BAA-894) (Enterobacter sakazakii), this protein is Ribosome maturation factor RimM.